The chain runs to 513 residues: Maturase K (513 aa).

It belongs to the intron maturase 2 family. MatK subfamily.

Its subcellular location is the plastid. The protein localises to the chloroplast. Its function is as follows. Usually encoded in the trnK tRNA gene intron. Probably assists in splicing its own and other chloroplast group II introns. The protein is Maturase K of Sporobolus michauxianus (Prairie cordgrass).